A 186-amino-acid polypeptide reads, in one-letter code: Casparian strip membrane protein 6 (186 aa).

Over 1 to 23 the chain is Cytoplasmic; sequence MKAGPIELGEGKSSAPKAAVNRG. The helical transmembrane segment at 24 to 44 threads the bilayer; the sequence is VAILDFILRILAFIGTLGSAI. The Extracellular segment spans residues 45-73; it reads SMATTNETLPFFTQFIRFRAEYDDLPTFT. Asn50 is a glycosylation site (N-linked (GlcNAc...) asparagine). A helical membrane pass occupies residues 74–94; that stretch reads FFVVANGVVSAYLLFSLPFSI. Residues 95-106 are Cytoplasmic-facing; sequence FNIVRSKAQNSR. Residues 107–127 traverse the membrane as a helical segment; the sequence is ILLIILDTAMLGLLSAGASAA. Residues 128 to 160 are Extracellular-facing; that stretch reads AAIVYLAHQGNVRTNWSAICQQFNSFCERISGS. Asn142 carries an N-linked (GlcNAc...) asparagine glycan. A helical transmembrane segment spans residues 161–181; sequence LIGSFIGVVVFILLISLSAVA. The Cytoplasmic segment spans residues 182–186; it reads LSRHK.

This sequence belongs to the Casparian strip membrane proteins (CASP) family. As to quaternary structure, homodimer and heterodimers.

The protein localises to the cell membrane. Regulates membrane-cell wall junctions and localized cell wall deposition. Required for establishment of the Casparian strip membrane domain (CSD) and the subsequent formation of Casparian strips, a cell wall modification of the root endodermis that determines an apoplastic barrier between the intraorganismal apoplasm and the extraorganismal apoplasm and prevents lateral diffusion. The sequence is that of Casparian strip membrane protein 6 from Populus trichocarpa (Western balsam poplar).